We begin with the raw amino-acid sequence, 254 residues long: Triosephosphate isomerase (254 aa).

10 to 12 contributes to the substrate binding site; sequence NWK. His-99 functions as the Electrophile in the catalytic mechanism. Glu-169 serves as the catalytic Proton acceptor. Residues Gly-175, Ser-215, and 236–237 contribute to the substrate site; that span reads GG.

The protein belongs to the triosephosphate isomerase family. Homodimer.

The protein resides in the cytoplasm. It catalyses the reaction D-glyceraldehyde 3-phosphate = dihydroxyacetone phosphate. Its pathway is carbohydrate biosynthesis; gluconeogenesis. The protein operates within carbohydrate degradation; glycolysis; D-glyceraldehyde 3-phosphate from glycerone phosphate: step 1/1. In terms of biological role, involved in the gluconeogenesis. Catalyzes stereospecifically the conversion of dihydroxyacetone phosphate (DHAP) to D-glyceraldehyde-3-phosphate (G3P). This is Triosephosphate isomerase from Chlamydia caviae (strain ATCC VR-813 / DSM 19441 / 03DC25 / GPIC) (Chlamydophila caviae).